The following is a 282-amino-acid chain: Acetyl-coenzyme A carboxylase carboxyl transferase subunit beta (282 aa).

The 254-residue stretch at 29–282 (LMKRCPNCGL…LLKYGGMQDD (254 aa)) folds into the CoA carboxyltransferase N-terminal domain. Zn(2+)-binding residues include Cys-33, Cys-36, Cys-51, and Cys-54. A C4-type zinc finger spans residues 33-54 (CPNCGLEFFARRLDKYKTCPDC).

The protein belongs to the AccD/PCCB family. Acetyl-CoA carboxylase is a heterohexamer composed of biotin carboxyl carrier protein (AccB), biotin carboxylase (AccC) and two subunits each of ACCase subunit alpha (AccA) and ACCase subunit beta (AccD). It depends on Zn(2+) as a cofactor.

Its subcellular location is the cytoplasm. The enzyme catalyses N(6)-carboxybiotinyl-L-lysyl-[protein] + acetyl-CoA = N(6)-biotinyl-L-lysyl-[protein] + malonyl-CoA. The protein operates within lipid metabolism; malonyl-CoA biosynthesis; malonyl-CoA from acetyl-CoA: step 1/1. In terms of biological role, component of the acetyl coenzyme A carboxylase (ACC) complex. Biotin carboxylase (BC) catalyzes the carboxylation of biotin on its carrier protein (BCCP) and then the CO(2) group is transferred by the transcarboxylase to acetyl-CoA to form malonyl-CoA. The sequence is that of Acetyl-coenzyme A carboxylase carboxyl transferase subunit beta from Lactobacillus delbrueckii subsp. bulgaricus (strain ATCC 11842 / DSM 20081 / BCRC 10696 / JCM 1002 / NBRC 13953 / NCIMB 11778 / NCTC 12712 / WDCM 00102 / Lb 14).